The primary structure comprises 451 residues: UPF0210 protein LMHCC_2097 (451 aa).

The protein belongs to the UPF0210 family. In terms of assembly, homodimer.

This chain is UPF0210 protein LMHCC_2097, found in Listeria monocytogenes serotype 4a (strain HCC23).